A 1311-amino-acid chain; its full sequence is Ubiquitin carboxyl-terminal hydrolase 36 (1311 aa).

Composition is skewed to low complexity over residues 120-134 (AAAA…SAGS) and 156-174 (STPT…SSSS). Positions 120–189 (AAAATNNGNS…NPNELPKPKR (70 aa)) are disordered. The region spanning 212–533 (AGMINVGNTC…NSYIMFYELD (322 aa)) is the USP domain. The active-site Nucleophile is the C221. H492 serves as the catalytic Proton acceptor. Residues 546–575 (NGLRQLSNGHHHHQQQQQQHQQQQQQQPTV) form a disordered region. A compositionally biased stretch (low complexity) spans 560-572 (QQQQQHQQQQQQQ). The residue at position 581 (S581) is a Phosphoserine. Disordered stretches follow at residues 587–620 (TRFI…GHSQ), 640–1095 (KFQE…GCLN), and 1136–1311 (DHGD…QQQS). Low complexity-rich tracts occupy residues 605–616 (TTTTTATNNTTN), 660–716 (APAV…QQQQ), and 759–774 (TLTL…STPT). The residue at position 767 (T767) is a Phosphothreonine. Residues S787 and S789 each carry the phosphoserine modification. Low complexity predominate over residues 795 to 826 (SSGTPSSSTPTTTTTAAAAAASSPMQATAAAT). Over residues 836–853 (ARKRSLPDHHHHHPHHHV) the composition is skewed to basic residues. The segment covering 869–879 (PATNFNSSSSK) has biased composition (polar residues). A compositionally biased stretch (basic and acidic residues) spans 880–889 (QKTDAIDEIF). Over residues 896-905 (NKKRINNKNQ) the composition is skewed to basic residues. The span at 910–920 (GDEEEDDEETL) shows a compositional bias: acidic residues. Low complexity-rich tracts occupy residues 925 to 942 (NNSS…PTTN) and 950 to 979 (VSSS…STSA). The segment covering 980-989 (PPSPKTPPSP) has biased composition (pro residues). Position 982 is a phosphoserine (S982). T985 is subject to Phosphothreonine. S988 is subject to Phosphoserine. Residues 1006 to 1020 (DDDDDEEEEDEDDEE) show a composition bias toward acidic residues. Residues 1037–1050 (PFSSQQKPTPSPST) are compositionally biased toward low complexity. At S1047 the chain carries Phosphoserine. At T1050 the chain carries Phosphothreonine. Residues 1060–1081 (FNGTSSSTPHVGNGYQSEPSTP) are compositionally biased toward polar residues. 2 stretches are compositionally biased toward low complexity: residues 1154-1176 (VVTT…TADA) and 1204-1221 (TANG…PGYN). A compositionally biased stretch (polar residues) spans 1246-1255 (QHASSSYRSN). Over residues 1267–1276 (GGNGGGGSGG) the composition is skewed to gly residues.

This sequence belongs to the peptidase C19 family. In terms of assembly, interacts with atms/PAF1, but not with CycT.

The protein localises to the nucleus. It localises to the nucleolus. The catalysed reaction is Thiol-dependent hydrolysis of ester, thioester, amide, peptide and isopeptide bonds formed by the C-terminal Gly of ubiquitin (a 76-residue protein attached to proteins as an intracellular targeting signal).. Required for maintaining multiple types of adult stem cells, including male and female germline, epithelial follicle cell and intestinal stem cells. May function as a transcriptional repressor by continually deubiquiting histone H2B at the promoters of genes critical for cellular differentiation, thereby preventing histone H3 'Lys-4' trimethylation (H3K4). Controls selective autophagy activation by ubiquitinated proteins. This is Ubiquitin carboxyl-terminal hydrolase 36 (Usp36) from Drosophila willistoni (Fruit fly).